Reading from the N-terminus, the 521-residue chain is Occludin (521 aa).

The disordered stretch occupies residues 1 to 20 (MSVRPFESPPPYRPDEFKPN). Over 1–66 (MSVRPFESPP…KWTSPPGVIR (66 aa)) the chain is Cytoplasmic. In terms of domain architecture, MARVEL spans 60-267 (SPPGVIRILS…IIFFAVKTRR (208 aa)). A helical membrane pass occupies residues 67 to 89 (ILSMLIIVMCIAIFACVASTLAW). Topologically, residues 90 to 133 (DRGYGTGLFGGSLNYPYSGFGYGGGYGGGYGGYGYGYGGYTDPR) are extracellular. A helical transmembrane segment spans residues 134 to 158 (AAKGFLLAMAAFCFIASLVIFVTSV). At 159 to 168 (IRSGMSRTRR) the chain is on the cytoplasmic side. The helical transmembrane segment at 169–193 (YYLIVIIVSAILGIMVFIATIVYIM) threads the bilayer. Residues 194–241 (GVNPTAQASGSMYGSQIYMICNQFYTPGGTGLYVDQYLYHYCVVDPQE) lie on the Extracellular side of the membrane. The cysteines at positions 214 and 235 are disulfide-linked. The chain crosses the membrane as a helical span at residues 242–263 (AIAIVLGFMIIVAFALIIFFAV). Residues 264–521 (KTRRKMDRYD…MVGDYDRRKP (258 aa)) are Cytoplasmic-facing. S300 carries the post-translational modification Phosphoserine. A disordered region spans residues 300-329 (SAGTQDMPPPPSDYAERVDSPMAYSSNGKV). T303 bears the Phosphothreonine mark. S311 and S319 each carry phosphoserine. Position 338 is a phosphoserine; by PKC; in vitro (S338). S358 bears the Phosphoserine mark. Positions 361–405 (DFRQPRYSSNGNLETPSKRAPTKGKAGKGKRTDPDHYETDYTTGG) are disordered. Residues 366–375 (RYSSNGNLET) show a composition bias toward polar residues. Y367 is subject to Phosphotyrosine. Phosphoserine is present on residues S368 and S369. Residues 380-389 (APTKGKAGKG) are compositionally biased toward basic residues. The segment covering 390–399 (KRTDPDHYET) has biased composition (basic and acidic residues). A phosphotyrosine mark is found at Y397 and Y401. T402 bears the Phosphothreonine; by PKC/PRKCH mark. Residue T403 is modified to Phosphothreonine. S407 bears the Phosphoserine mark. The region spanning 413 to 521 (EDWVREYPPI…MVGDYDRRKP (109 aa)) is the OCEL domain. Positions 424–488 (SDQQRQLYKR…EYNRLKQVKG (65 aa)) form a coiled coil. S489 carries the post-translational modification Phosphoserine.

The protein belongs to the ELL/occludin family. In terms of assembly, interacts with TJP1/ZO1. Interacts with VAPA. Interacts with CLDN1, CLDN6, CLDN9, CLDN11, CLDN12 and CLDN17. Interacts with PLSCR1. Interacts with LSR, ILDR1 and ILDR2. Interacts with TJP2/ZO2. In terms of processing, dephosphorylated by PTPRJ. May be phosphorylated by PKC during translocation to cell-cell contacts. In terms of tissue distribution, localized at tight junctions of both epithelial and endothelial cells. Highly expressed in the testis, kidney, lung, liver and brain. Not detected in skeletal muscle, spleen and heart.

The protein resides in the cell membrane. It is found in the cell junction. Its subcellular location is the tight junction. In terms of biological role, may play a role in the formation and regulation of the tight junction (TJ) paracellular permeability barrier. The sequence is that of Occludin (Ocln) from Mus musculus (Mouse).